Consider the following 104-residue polypeptide: Flagellar hook-basal body complex protein FliE (104 aa).

This sequence belongs to the FliE family.

It is found in the bacterial flagellum basal body. This chain is Flagellar hook-basal body complex protein FliE, found in Serratia proteamaculans (strain 568).